Here is a 211-residue protein sequence, read N- to C-terminus: High mobility group protein B1-like 1 (211 aa).

N6-acetyllysine is present on residues K3, K7, K8, K12, K28, K29, and K30. Residues 9 to 79 (PRGKMSSYAF…HYERQMKTYI (71 aa)) constitute a DNA-binding region (HMG box 1). The interval 71–96 (YERQMKTYIPPKGETKKKFKDPNAPK) is disordered. Positions 83–94 (GETKKKFKDPNA) are enriched in basic and acidic residues. A DNA-binding region (HMG box 2) is located at residues 95 to 163 (PKRPPSAFFL…KYEKDIAAYQ (69 aa)). N6-acetyllysine is present on residues K127, K128, K172, K173, K177, K180, K182, K183, K184, and K185. Residues 161 to 211 (AYQAKGKPEAAKKGVVKAEKSKKKKEEEEDEEDEEDEEEEDEEDEEDDDDE) are disordered. A compositionally biased stretch (basic and acidic residues) spans 166–179 (GKPEAAKKGVVKAE). Acidic residues predominate over residues 187-211 (EEEDEEDEEDEEEEDEEDEEDDDDE).

It belongs to the HMGB family.

It localises to the nucleus. The protein resides in the chromosome. Binds preferentially single-stranded DNA and unwinds double-stranded DNA. The protein is High mobility group protein B1-like 1 (HMGB1P1) of Homo sapiens (Human).